Consider the following 101-residue polypeptide: Large ribosomal subunit protein eL30 (101 aa).

Belongs to the eukaryotic ribosomal protein eL30 family.

This Pyrobaculum neutrophilum (strain DSM 2338 / JCM 9278 / NBRC 100436 / V24Sta) (Thermoproteus neutrophilus) protein is Large ribosomal subunit protein eL30.